The chain runs to 208 residues: ATP-dependent Clp protease proteolytic subunit (208 aa).

Serine 105 (nucleophile) is an active-site residue. Histidine 130 is a catalytic residue.

The protein belongs to the peptidase S14 family. As to quaternary structure, fourteen ClpP subunits assemble into 2 heptameric rings which stack back to back to give a disk-like structure with a central cavity, resembling the structure of eukaryotic proteasomes.

It is found in the cytoplasm. It catalyses the reaction Hydrolysis of proteins to small peptides in the presence of ATP and magnesium. alpha-casein is the usual test substrate. In the absence of ATP, only oligopeptides shorter than five residues are hydrolyzed (such as succinyl-Leu-Tyr-|-NHMec, and Leu-Tyr-Leu-|-Tyr-Trp, in which cleavage of the -Tyr-|-Leu- and -Tyr-|-Trp bonds also occurs).. Cleaves peptides in various proteins in a process that requires ATP hydrolysis. Has a chymotrypsin-like activity. Plays a major role in the degradation of misfolded proteins. The sequence is that of ATP-dependent Clp protease proteolytic subunit from Xylella fastidiosa (strain M12).